Here is a 321-residue protein sequence, read N- to C-terminus: Glucokinase (321 aa).

10 to 15 contacts ATP; the sequence is GDIGGT.

The protein belongs to the bacterial glucokinase family.

It localises to the cytoplasm. It catalyses the reaction D-glucose + ATP = D-glucose 6-phosphate + ADP + H(+). The chain is Glucokinase from Marinobacter nauticus (strain ATCC 700491 / DSM 11845 / VT8) (Marinobacter aquaeolei).